We begin with the raw amino-acid sequence, 401 residues long: 8-amino-7-oxononanoate synthase (401 aa).

Position 24 (Arg24) interacts with substrate. 111–112 (GF) is a binding site for pyridoxal 5'-phosphate. Residue His137 participates in substrate binding. The pyridoxal 5'-phosphate site is built by Ser183, His211, and Thr240. At Lys243 the chain carries N6-(pyridoxal phosphate)lysine. Thr357 lines the substrate pocket.

The protein belongs to the class-II pyridoxal-phosphate-dependent aminotransferase family. BioF subfamily. As to quaternary structure, homodimer. It depends on pyridoxal 5'-phosphate as a cofactor.

The enzyme catalyses 6-carboxyhexanoyl-[ACP] + L-alanine + H(+) = (8S)-8-amino-7-oxononanoate + holo-[ACP] + CO2. The protein operates within cofactor biosynthesis; biotin biosynthesis. Catalyzes the decarboxylative condensation of pimeloyl-[acyl-carrier protein] and L-alanine to produce 8-amino-7-oxononanoate (AON), [acyl-carrier protein], and carbon dioxide. In Xylella fastidiosa (strain 9a5c), this protein is 8-amino-7-oxononanoate synthase.